Reading from the N-terminus, the 673-residue chain is Probable serine/threonine-protein kinase SCO3848 (673 aa).

In terms of domain architecture, Protein kinase spans 11–277 (YELGPVLGRG…EMRVDIEACL (267 aa)). ATP is bound by residues 17–25 (LGRGGMAEV) and Lys-40. The active-site Proton acceptor is the Asp-138. Positions 302 to 345 (DQPTTALRSDGGGGATTMLPPMNPDDGGYGYDERPDRRRQQPRK) are disordered. 4 PASTA domains span residues 379 to 445 (GNDK…VVST), 446 to 511 (GAPK…EVAK), 512 to 580 (AEEK…VVGK), and 581 to 649 (AVEK…MTVP). Residues 472–500 (FEVETKQTESSQDEGTILSQNPDPGKELE) are disordered. Residues 479–493 (TESSQDEGTILSQNP) are compositionally biased toward polar residues. Disordered stretches follow at residues 613 to 641 (AQGS…PAAT) and 653 to 673 (GNGN…GFGD).

It belongs to the protein kinase superfamily. Ser/Thr protein kinase family.

It catalyses the reaction L-seryl-[protein] + ATP = O-phospho-L-seryl-[protein] + ADP + H(+). The enzyme catalyses L-threonyl-[protein] + ATP = O-phospho-L-threonyl-[protein] + ADP + H(+). This Streptomyces coelicolor (strain ATCC BAA-471 / A3(2) / M145) protein is Probable serine/threonine-protein kinase SCO3848.